The chain runs to 133 residues: DNA-directed RNA polymerases I, II, and III subunit rpabc2 (133 aa).

Positions 1 to 32 (MADFEGGGDDGGYEEFDEGGGFEEEYVEETET) are enriched in acidic residues. Residues 1 to 55 (MADFEGGGDDGGYEEFDEGGGFEEEYVEETETTEAYTDIIDPSADANTAEAGRIP) form a disordered region.

It belongs to the archaeal Rpo6/eukaryotic RPB6 RNA polymerase subunit family. Component of the RNA polymerase I (Pol I), RNA polymerase II (Pol II) and RNA polymerase III (Pol III) complexes consisting of at least 13, 12 and 17 subunits, respectively.

Its subcellular location is the nucleus. DNA-dependent RNA polymerases catalyze the transcription of DNA into RNA using the four ribonucleoside triphosphates as substrates. Common component of RNA polymerases I, II and III which synthesize ribosomal RNA precursors, mRNA precursors and many functional non-coding RNAs, and small RNAs, such as 5S rRNA and tRNAs, respectively. Pol II is the central component of the basal RNA polymerase II transcription machinery. Pols are composed of mobile elements that move relative to each other. In Pol II, RPB6 is part of the clamp element and together with parts of RPB1 and RPB2 forms a pocket to which the RPB4-RPB7 subcomplex binds. The polypeptide is DNA-directed RNA polymerases I, II, and III subunit rpabc2 (polr2f) (Dictyostelium discoideum (Social amoeba)).